Reading from the N-terminus, the 834-residue chain is 5-hydroxytryptamine receptor 2A (834 aa).

Over 1–230 the chain is Extracellular; sequence MAHETSFNDA…TQLLRMAVTS (230 aa). The tract at residues 56–75 is disordered; that stretch reads TDDGQLEDTNNNNNSKRYYS. Residues asparagine 68, asparagine 97, asparagine 161, asparagine 175, asparagine 183, asparagine 194, asparagine 203, and asparagine 209 are each glycosylated (N-linked (GlcNAc...) asparagine). The helical transmembrane segment at 231-253 threads the bilayer; it reads VLLGLMILVTIIGNVFVIAAIIL. Residues 254–263 are Cytoplasmic-facing; the sequence is ERNLQNVANY. A helical transmembrane segment spans residues 264-285; the sequence is LVASLAVADLFVACLVMPLGAV. The Extracellular segment spans residues 286–300; sequence YEISQGWILGPELCD. The cysteines at positions 299 and 378 are disulfide-linked. The helical transmembrane segment at 301–322 threads the bilayer; sequence IWTSCDVLCCTASILHLVAIAV. At 323 to 341 the chain is on the cytoplasmic side; sequence DRYWAVTNIDYIHSRTSNR. A helical transmembrane segment spans residues 342–364; the sequence is VFMMIFCVWTAAVIVSLAPQFGW. Residues 365–391 are Extracellular-facing; that stretch reads KDPDYLQRIEQQKCMVSQDVSYQVFAT. A helical transmembrane segment spans residues 392–413; that stretch reads CCTFYVPLLVILALYWKIYQTA. Residues 414 to 752 lie on the Cytoplasmic side of the membrane; it reads RKRIHRRRPR…AKRERKAAKT (339 aa). Disordered regions lie at residues 420–442, 460–516, 531–599, 617–640, and 674–743; these read RRPR…ATDT, KTGS…STSG, QQGK…SEDQ, LEQV…TSNA, and STLT…TLEA. 2 stretches are compositionally biased toward polar residues: residues 482–502 and 532–542; these read GNST…SNVD and QGKSTAKSSAA. Over residues 551-564 the composition is skewed to basic and acidic residues; the sequence is RQEDDGQRPEHGEQ. The span at 565-575 shows a compositional bias: acidic residues; that stretch reads EDREELEDQDE. A compositionally biased stretch (low complexity) spans 582 to 593; it reads TTATSATTAAGT. Positions 674 to 694 are enriched in polar residues; that stretch reads STLTSCNQSHPLCGTANESPS. The segment covering 702–723 has biased composition (low complexity); the sequence is QPTTPQQQPHQQAHQQQQQQQQ. Residues 753–776 form a helical membrane-spanning segment; that stretch reads LAIITGAFVVCWLPFFVMALTMPL. The Extracellular segment spans residues 777 to 785; the sequence is CAACQISDS. A helical membrane pass occupies residues 786–808; sequence VASLFLWLGYFNSTLNPVIYTIF. Over 809–834 the chain is Cytoplasmic; that stretch reads SPEFRQAFKRILFGGHRPVHYRSGKL.

Belongs to the G-protein coupled receptor 1 family.

The protein resides in the cell membrane. In terms of biological role, this is one of the several different receptors for 5-hydroxytryptamine (serotonin), a biogenic hormone that functions as a neurotransmitter, a hormone, and a mitogen. The activity of this receptor is mediated by G proteins which inhibit adenylate cyclase. The polypeptide is 5-hydroxytryptamine receptor 2A (5-HT1A) (Drosophila melanogaster (Fruit fly)).